The chain runs to 298 residues: Lipoyl synthase 1 (298 aa).

7 residues coordinate [4Fe-4S] cluster: C34, C39, C45, C60, C64, C67, and S274. The Radical SAM core domain maps to 46–263; it reads FKAGTATFLI…RRAGEGMGFL (218 aa). The segment at 277 to 298 is disordered; sequence AEQVQRLMRSHPRTPKNQHSPE.

This sequence belongs to the radical SAM superfamily. Lipoyl synthase family. It depends on [4Fe-4S] cluster as a cofactor.

The protein resides in the cytoplasm. The catalysed reaction is [[Fe-S] cluster scaffold protein carrying a second [4Fe-4S](2+) cluster] + N(6)-octanoyl-L-lysyl-[protein] + 2 oxidized [2Fe-2S]-[ferredoxin] + 2 S-adenosyl-L-methionine + 4 H(+) = [[Fe-S] cluster scaffold protein] + N(6)-[(R)-dihydrolipoyl]-L-lysyl-[protein] + 4 Fe(3+) + 2 hydrogen sulfide + 2 5'-deoxyadenosine + 2 L-methionine + 2 reduced [2Fe-2S]-[ferredoxin]. It participates in protein modification; protein lipoylation via endogenous pathway; protein N(6)-(lipoyl)lysine from octanoyl-[acyl-carrier-protein]: step 2/2. Catalyzes the radical-mediated insertion of two sulfur atoms into the C-6 and C-8 positions of the octanoyl moiety bound to the lipoyl domains of lipoate-dependent enzymes, thereby converting the octanoylated domains into lipoylated derivatives. The polypeptide is Lipoyl synthase 1 (Gloeobacter violaceus (strain ATCC 29082 / PCC 7421)).